The sequence spans 82 residues: Diptericin-A (82 aa).

2 disordered regions span residues 1–32 and 45–69; these read DEKP…DGFG and DNGG…GNSR. Position 82 is a phenylalanine amide (Phe82).

This sequence belongs to the attacin/sarcotoxin-2 family.

The protein resides in the secreted. In terms of biological role, antimicrobial peptide required to resist Gram-negative bacterial infections, regulated by Dredd. The protein is Diptericin-A of Protophormia terraenovae (Northern blowfly).